We begin with the raw amino-acid sequence, 513 residues long: Na(+)/H(+) antiporter NhaB (513 aa).

Transmembrane regions (helical) follow at residues 23–43 (LALI…PFVA), 52–72 (IFTL…LLAI), 97–117 (LLLM…LFIF), 120–140 (LLLS…AAAF), 144–164 (FLDA…FYGI), 202–222 (LMMH…VGEP), 238–258 (FFLR…LTCL), 303–323 (AIIG…VGLI), 348–368 (TESL…AVII), 391–411 (LFYI…VGTI), 447–467 (ATPN…APLI), and 475–495 (VWMA…CVEF).

The protein belongs to the NhaB Na(+)/H(+) (TC 2.A.34) antiporter family.

Its subcellular location is the cell inner membrane. The catalysed reaction is 2 Na(+)(in) + 3 H(+)(out) = 2 Na(+)(out) + 3 H(+)(in). In terms of biological role, na(+)/H(+) antiporter that extrudes sodium in exchange for external protons. This chain is Na(+)/H(+) antiporter NhaB, found in Escherichia coli O127:H6 (strain E2348/69 / EPEC).